The following is a 296-amino-acid chain: Morphine 6-dehydrogenase (296 aa).

13–22 (GVKMPALGLG) lines the NADP(+) pocket. Tyr52 (proton donor) is an active-site residue. His110 contributes to the substrate binding site.

It belongs to the aldo/keto reductase family. Monomer.

The catalysed reaction is morphine + NAD(+) = morphinone + NADH + H(+). It catalyses the reaction morphine + NADP(+) = morphinone + NADPH + H(+). It functions in the pathway alkaloid degradation; codeine degradation. It participates in alkaloid degradation; morphine degradation. In terms of biological role, oxidizes only the C-6 hydroxy group of morphine and codeine. The polypeptide is Morphine 6-dehydrogenase (morA) (Pseudomonas putida (Arthrobacter siderocapsulatus)).